The following is a 356-amino-acid chain: Chorismate synthase (356 aa).

Arg48 and Arg54 together coordinate NADP(+). FMN contacts are provided by residues 125 to 127 (RSS), 237 to 238 (NA), Gly282, 297 to 301 (KPTSS), and Arg323.

It belongs to the chorismate synthase family. In terms of assembly, homotetramer. It depends on FMNH2 as a cofactor.

The catalysed reaction is 5-O-(1-carboxyvinyl)-3-phosphoshikimate = chorismate + phosphate. Its pathway is metabolic intermediate biosynthesis; chorismate biosynthesis; chorismate from D-erythrose 4-phosphate and phosphoenolpyruvate: step 7/7. Its function is as follows. Catalyzes the anti-1,4-elimination of the C-3 phosphate and the C-6 proR hydrogen from 5-enolpyruvylshikimate-3-phosphate (EPSP) to yield chorismate, which is the branch point compound that serves as the starting substrate for the three terminal pathways of aromatic amino acid biosynthesis. This reaction introduces a second double bond into the aromatic ring system. This is Chorismate synthase from Rhizorhabdus wittichii (strain DSM 6014 / CCUG 31198 / JCM 15750 / NBRC 105917 / EY 4224 / RW1) (Sphingomonas wittichii).